The primary structure comprises 574 residues: Probable cytochrome c oxidase subunit 1 (574 aa).

Residues 40–60 traverse the membrane as a helical segment; the sequence is IGIMYCVACFIFFFVGGLLAL. His86 is a Fe(II)-heme a binding site. A run of 6 helical transmembrane segments spans residues 89–109, 121–141, 170–190, 213–233, 258–278, and 290–310; these read IMLL…VLPL, LNAF…AGFI, LWIM…VNMI, ILVT…ALFG, LFWF…FGIV, and IFGY…SVAV. The Cu cation site is built by His264 and Tyr268. The 1'-histidyl-3'-tyrosine (His-Tyr) cross-link spans 264-268; that stretch reads HPEVY. Positions 313 and 314 each coordinate Cu cation. Helical transmembrane passes span 315 to 335 and 359 to 379; these read MFAT…LIAV and MLFS…GVLL. His397 lines the heme a3 pocket. A run of 3 helical transmembrane segments spans residues 398–418, 433–453, and 476–496; these read FHYV…YFWF, LHFW…HWLG, and VSTI…WNVF. His399 serves as a coordination point for Fe(II)-heme a.

The protein belongs to the heme-copper respiratory oxidase family. In terms of assembly, associates with subunits II, III and IV to form cytochrome c oxidase. Cu(2+) is required as a cofactor. Requires heme as cofactor.

The protein resides in the cell membrane. It catalyses the reaction 4 Fe(II)-[cytochrome c] + O2 + 8 H(+)(in) = 4 Fe(III)-[cytochrome c] + 2 H2O + 4 H(+)(out). It participates in energy metabolism; oxidative phosphorylation. Functionally, cytochrome c oxidase is the component of the respiratory chain that catalyzes the reduction of oxygen to water. Subunits 1-3 form the functional core of the enzyme complex. CO I is the catalytic subunit of the enzyme. Electrons originating in cytochrome c are transferred via the copper A center of subunit 2 and heme A of subunit 1 to the bimetallic center formed by heme A3 and copper B. The protein is Probable cytochrome c oxidase subunit 1 (ctaD) of Mycobacterium leprae (strain TN).